The following is a 184-amino-acid chain: Probable chemoreceptor glutamine deamidase CheD (184 aa).

The protein belongs to the CheD family.

The enzyme catalyses L-glutaminyl-[protein] + H2O = L-glutamyl-[protein] + NH4(+). Probably deamidates glutamine residues to glutamate on methyl-accepting chemotaxis receptors (MCPs), playing an important role in chemotaxis. In Rhizobium johnstonii (strain DSM 114642 / LMG 32736 / 3841) (Rhizobium leguminosarum bv. viciae), this protein is Probable chemoreceptor glutamine deamidase CheD.